We begin with the raw amino-acid sequence, 409 residues long: Short chain dehydrogenase sirS (409 aa).

Positions 49, 68, 195, 288, 290, and 299 each coordinate NADP(+). The tract at residues 306–332 (GVGPEGAGEEEGKGEAEGGAKGATGWS) is disordered.

The protein belongs to the short-chain dehydrogenases/reductases (SDR) family. Highly divergent.

It functions in the pathway mycotoxin biosynthesis. Functionally, short chain dehydrogenase; part of the gene cluster that mediates the biosynthesis of sirodesmin PL, an epipolythiodioxopiperazine (ETP) characterized by a disulfide bridged cyclic dipeptide and that acts as a phytotoxin which is involved in the blackleg didease of canola. SirD catalyzes the O-prenylation of L-tyrosine (L-Tyr) in the presence of dimethylallyl diphosphate (DMAPP) to yield 4-O-dimethylallyl-L-Tyr, and therefore represents probably the first pathway-specific enzyme in the biosynthesis of sirodesmin PL. 4-O-dimethylallyl-L-Tyr, then undergoes condensation with L-Ser in a reaction catalyzed by the non-ribosomal peptide synthase sirP to form the diketopiperazine (DKP) backbone. Further bishydroxylation of the DKP performed by the cytochrome P450 monooxygenase sirC leads to the production of the intermediate phomamide. This step is essential to form the reactive thiol group required for toxicity of sirodesmin PL. The next steps of sirodesmin biosynthesis are not well understood yet, but some predictions could be made from intermediate compounds identification. Phomamide is converted into phomalizarine via oxidation, probably by sirT. Further oxidation, methylation (by sirM or sirN) and reduction steps convert phomalizarine to deacetyl sirodesmin. Finally, acetyltransferase sirH probably acetylates deacetyl sirodesmin to produce sirodesmin PL. The polypeptide is Short chain dehydrogenase sirS (Leptosphaeria maculans (Blackleg fungus)).